Here is a 283-residue protein sequence, read N- to C-terminus: Protein canopy homolog 3 (283 aa).

A signal peptide spans 1–35 (MEPLPEPTSRPRLRPRPRCLLLLPLLLLLLLLLPA). The Saposin B-type domain occupies 55 to 276 (SKCEVCKYVA…EGIQKASPLT (222 aa)). Asparagine 161 carries N-linked (GlcNAc...) asparagine glycosylation. The stretch at 161 to 187 (NETSAEVADLKKQCDVLVEEFEEVIED) forms a coiled coil. The disordered stretch occupies residues 223–283 (KGDTAALGGK…PLTHSPPDEL (61 aa)).

Belongs to the canopy family. As to quaternary structure, interacts with HSP90B1; this interaction is disrupted in the presence of ATP. Interacts with TLR1, TLR2, TLR4 and TLR9.

It is found in the endoplasmic reticulum. Functionally, toll-like receptor (TLR)-specific co-chaperone for HSP90B1. Required for proper TLR folding, except that of TLR3, and hence controls TLR exit from the endoplasmic reticulum. Consequently, required for both innate and adaptive immune responses. This chain is Protein canopy homolog 3 (CNPY3), found in Sus scrofa (Pig).